The following is a 35-amino-acid chain: KSSAEVQQTQQASIPASQKANLGNQNNIMXVAXYQ.

Residues 1–28 show a composition bias toward polar residues; it reads KSSAEVQQTQQASIPASQKANLGNQNNI. The segment at 1–35 is disordered; that stretch reads KSSAEVQQTQQASIPASQKANLGNQNNIMXVAXYQ.

Functionally, highly cationic enzyme that can bind human or rat immunoglobulins as well as serum albumin, and could therefore be involved in post-infectious sequelae. This chain is 30 kDa neutral phosphatase, found in Staphylococcus aureus.